The chain runs to 118 residues: Eukaryotic translation initiation factor 4E-binding protein 1 (118 aa).

2 stretches are compositionally biased toward polar residues: residues 1 to 12 and 34 to 48; these read MSGGSSCSQTPS and YSTTPGGTLFSTTPG. Disordered stretches follow at residues 1-20 and 25-48; these read MSGGSSCSQTPSRAIPATRR and DGVQLPPGDYSTTPGGTLFSTTPG. S2 is subject to N-acetylserine. Position 37 is a phosphothreonine; by MTOR (T37). Residue T41 is modified to Phosphothreonine. S44 bears the Phosphoserine mark. The residue at position 46 (T46) is a Phosphothreonine; by MTOR. T50 carries the phosphothreonine modification. At Y54 the chain carries Phosphotyrosine. The YXXXXLphi motif motif lies at 54–60; the sequence is YDRKFLM. Residue K57 forms a Glycyl lysine isopeptide (Lys-Gly) (interchain with G-Cter in ubiquitin) linkage. Positions 64–118 are disordered; it reads NSPVTKTPPRDLPTIPGVTSPSSDEPPMEASQSHLRNSPEDKRAGGEESQFEMDI. The residue at position 65 (S65) is a Phosphoserine; by DYRK2, MAPK1, MAPK3 and MTOR. T70 bears the Phosphothreonine; by MTOR mark. T77 carries the post-translational modification Phosphothreonine. Phosphoserine occurs at positions 83 and 96. Residues 100–109 show a composition bias toward basic and acidic residues; it reads NSPEDKRAGG. S101 carries the post-translational modification Phosphoserine; by DYRK2. At S112 the chain carries Phosphoserine. The TOS motif motif lies at 114–118; it reads FEMDI.

It belongs to the eIF4E-binding protein family. As to quaternary structure, hypophosphorylated EIF4EBP1 competes with EIF4G1/EIF4G3 to interact with EIF4E; insulin stimulated MAP-kinase (MAPK1 and MAPK3) or mTORC1 phosphorylation of EIF4EBP1 causes dissociation of the complex allowing EIF4G1/EIF4G3 to bind and consequent initiation of translation. Interacts (via TOS motif) with RPTOR; promoting phosphorylation by mTORC1. Post-translationally, phosphorylated on serine and threonine residues in response to insulin, EGF and PDGF. Phosphorylation at Thr-37, Thr-46, Ser-65 and Thr-70, corresponding to the hyperphosphorylated form, is regulated by mTORC1 and abolishes binding to EIF4E. In terms of processing, ubiquitinated: when eIF4E levels are low, hypophosphorylated form is ubiquitinated by the BCR(KLHL25) complex, leading to its degradation and serving as a homeostatic mechanism to maintain translation and prevent eIF4E inhibition when eIF4E levels are low. Not ubiquitinated when hyperphosphorylated (at Thr-37, Thr-46, Ser-65 and Thr-70) or associated with eIF4E.

The protein resides in the cytoplasm. It localises to the nucleus. Its function is as follows. Repressor of translation initiation that regulates EIF4E activity by preventing its assembly into the eIF4F complex: hypophosphorylated form competes with EIF4G1/EIF4G3 and strongly binds to EIF4E, leading to repress translation. In contrast, hyperphosphorylated form dissociates from EIF4E, allowing interaction between EIF4G1/EIF4G3 and EIF4E, leading to initiation of translation. Mediates the regulation of protein translation by hormones, growth factors and other stimuli that signal through the MAP kinase and mTORC1 pathways. This Homo sapiens (Human) protein is Eukaryotic translation initiation factor 4E-binding protein 1 (EIF4EBP1).